The following is a 270-amino-acid chain: Formamidopyrimidine-DNA glycosylase (270 aa).

Catalysis depends on proline 2, which acts as the Schiff-base intermediate with DNA. Glutamate 3 serves as the catalytic Proton donor. The Proton donor; for beta-elimination activity role is filled by lysine 58. Histidine 91, arginine 110, and arginine 151 together coordinate DNA. The FPG-type zinc-finger motif lies at 236–270; it reads AVYGREGEPCTHCGAPLQGVRIGGRATIYCSQCQR. The active-site Proton donor; for delta-elimination activity is the arginine 260.

It belongs to the FPG family. As to quaternary structure, monomer. It depends on Zn(2+) as a cofactor.

It carries out the reaction Hydrolysis of DNA containing ring-opened 7-methylguanine residues, releasing 2,6-diamino-4-hydroxy-5-(N-methyl)formamidopyrimidine.. The enzyme catalyses 2'-deoxyribonucleotide-(2'-deoxyribose 5'-phosphate)-2'-deoxyribonucleotide-DNA = a 3'-end 2'-deoxyribonucleotide-(2,3-dehydro-2,3-deoxyribose 5'-phosphate)-DNA + a 5'-end 5'-phospho-2'-deoxyribonucleoside-DNA + H(+). Involved in base excision repair of DNA damaged by oxidation or by mutagenic agents. Acts as a DNA glycosylase that recognizes and removes damaged bases. Has a preference for oxidized purines, such as 7,8-dihydro-8-oxoguanine (8-oxoG). Has AP (apurinic/apyrimidinic) lyase activity and introduces nicks in the DNA strand. Cleaves the DNA backbone by beta-delta elimination to generate a single-strand break at the site of the removed base with both 3'- and 5'-phosphates. The sequence is that of Formamidopyrimidine-DNA glycosylase from Acidithiobacillus ferrooxidans (strain ATCC 23270 / DSM 14882 / CIP 104768 / NCIMB 8455) (Ferrobacillus ferrooxidans (strain ATCC 23270)).